A 73-amino-acid chain; its full sequence is UPF0346 protein SH1485 (73 aa).

It belongs to the UPF0346 family.

This is UPF0346 protein SH1485 from Staphylococcus haemolyticus (strain JCSC1435).